A 209-amino-acid chain; its full sequence is Large ribosomal subunit protein uL3 (209 aa).

An N5-methylglutamine modification is found at Gln150.

It belongs to the universal ribosomal protein uL3 family. Part of the 50S ribosomal subunit. Forms a cluster with proteins L14 and L19. Methylated by PrmB.

One of the primary rRNA binding proteins, it binds directly near the 3'-end of the 23S rRNA, where it nucleates assembly of the 50S subunit. This chain is Large ribosomal subunit protein uL3, found in Buchnera aphidicola subsp. Schizaphis graminum (strain Sg).